The primary structure comprises 276 residues: Bifunctional esterase/perhydrolase DCH (276 aa).

The AB hydrolase-1 domain occupies 23 to 254; it reads PVIFFHHGWP…NGKLISYPGF (232 aa). Catalysis depends on residues Ser-97, Asp-227, and His-256.

Belongs to the AB hydrolase superfamily. Bacterial non-heme haloperoxidase / perhydrolase family. In terms of assembly, homodimer.

The enzyme catalyses 3,4-dihydrocoumarin + H2O = 3-(2-hydroxyphenyl)propanoate + H(+). It catalyses the reaction peracetic acid + H2O = acetate + H2O2 + H(+). The catalysed reaction is a percarboxylic acid + H2O = a carboxylate + H2O2 + H(+). Inhibited by the serine protease inhibitors diisopropyl fluorophosphate and phenylmethanesulfonyl fluoride. Its function is as follows. Multifunctional enzyme, which shows esterase and perhydrolase activities, and is capable of organic acid-assisted bromination of organic compounds. Catalyzes the hydrolysis of 3,4-dihydrocoumarin. Aromatic lactones other than 3,4-dihydrocoumarin, such as 2-coumaranone and homogentisic acid lactone, are also substrates, but their activities relative to that of 3,4-dihydrocoumarin are quite low. Also catalyzes the hydrolysis of several linear esters, with specificity toward methyl esters. In addition, shows perhydrolase activity and catalyzes the dose- and time-dependent degradation of peracetic acid, a broad-spectrum biocide, to acetic acid and hydrogen peroxide. It suggests that in vivo DCH may play a role in the oxidative stress defense system and detoxify peroxoacids in conjunction with the catalase, i.e. peroxoacids are first hydrolyzed to the corresponding acids and hydrogen peroxide by DCH, and then the resulting hydrogen peroxide is degraded by the catalase. Also shows organic acid-assisted bromination activity toward monochlorodimedon when incubated with hydrogen peroxide and dihydrocoumarin or an organic acid, such as acetate and n-butyrate. In Acinetobacter calcoaceticus, this protein is Bifunctional esterase/perhydrolase DCH.